Here is a 127-residue protein sequence, read N- to C-terminus: Glycine cleavage system H protein (127 aa).

The region spanning 24 to 105 (TLTIGITDLA…AYDAWLFKIK (82 aa)) is the Lipoyl-binding domain. Lys-65 is subject to N6-lipoyllysine.

It belongs to the GcvH family. The glycine cleavage system is composed of four proteins: P, T, L and H. (R)-lipoate is required as a cofactor.

Its function is as follows. The glycine cleavage system catalyzes the degradation of glycine. The H protein shuttles the methylamine group of glycine from the P protein to the T protein. The polypeptide is Glycine cleavage system H protein (Ralstonia nicotianae (strain ATCC BAA-1114 / GMI1000) (Ralstonia solanacearum)).